The chain runs to 715 residues: uncharacterized protein (715 aa).

Disordered stretches follow at residues 192 to 216 (ASSV…SVTA), 300 to 348 (NEEV…TSKR), 461 to 481 (ASSS…RSNE), and 580 to 630 (FTVS…KPPK). The span at 202–213 (NNTSPYPPSNSS) shows a compositional bias: low complexity. Polar residues-rich tracts occupy residues 301–326 (EEVS…NKND) and 472–481 (HLGTSLRSNE). Positions 601–614 (TDSSPSDTISSSPT) are enriched in low complexity.

This is an uncharacterized protein from Schizosaccharomyces pombe (strain 972 / ATCC 24843) (Fission yeast).